A 290-amino-acid polypeptide reads, in one-letter code: Nucleoid occlusion protein (290 aa).

Positions E153 to L172 form a DNA-binding region, H-T-H motif.

It belongs to the ParB family.

It localises to the cytoplasm. It is found in the nucleoid. Its function is as follows. Effects nucleoid occlusion by binding relatively nonspecifically to DNA and preventing the assembly of the division machinery in the vicinity of the nucleoid, especially under conditions that disturb the cell cycle. It helps to coordinate cell division and chromosome segregation by preventing the formation of the Z ring through the nucleoid, which would cause chromosome breakage. The sequence is that of Nucleoid occlusion protein from Bacillus mycoides (strain KBAB4) (Bacillus weihenstephanensis).